The primary structure comprises 136 residues: ATP synthase F(0) complex subunit C1, mitochondrial (136 aa).

The transit peptide at Met1 to Arg61 directs the protein to the mitochondrion. The chain crosses the membrane as a helical span at residues Val77 to Tyr97. The residue at position 104 (Lys104) is an N6,N6,N6-trimethyllysine. The chain crosses the membrane as a helical span at residues Ile112–Ile132.

Belongs to the ATPase C chain family. Homooctamer; the c-ring consists of eight c subunits forming a circle, and each subunit adopts a hairpin shape. Component of the ATP synthase complex composed at least of ATP5F1A/subunit alpha, ATP5F1B/subunit beta, ATP5MC1/subunit c (homooctomer), MT-ATP6/subunit a, MT-ATP8/subunit 8, ATP5ME/subunit e, ATP5MF/subunit f, ATP5MG/subunit g, ATP5MK/subunit k, ATP5MJ/subunit j, ATP5F1C/subunit gamma, ATP5F1D/subunit delta, ATP5F1E/subunit epsilon, ATP5PF/subunit F6, ATP5PB/subunit b, ATP5PD/subunit d, ATP5PO/subunit OSCP. ATP synthase complex consists of a soluble F(1) head domain (subunits alpha(3) and beta(3)) - the catalytic core - and a membrane F(0) domain - the membrane proton channel (subunits c, a, 8, e, f, g, k and j). These two domains are linked by a central stalk (subunits gamma, delta, and epsilon) rotating inside the F1 region and a stationary peripheral stalk (subunits F6, b, d, and OSCP). Interacts with TMEM70 (homooligomer form); this interaction facilitates the oligomer formation of subunit c/ATP5MC1 (c-ring) and the c-ring membrane insertion and also protects ATP5MC1 against intramitochondrial proteolysis. Trimethylated by ATPSCKMT at Lys-104. Methylation is required for proper incorporation of the C subunit into the ATP synthase complex and mitochondrial respiration.

The protein localises to the mitochondrion membrane. It carries out the reaction H(+)(in) = H(+)(out). In terms of biological role, subunit c, of the mitochondrial membrane ATP synthase complex (F(1)F(0) ATP synthase or Complex V) that produces ATP from ADP in the presence of a proton gradient across the membrane which is generated by electron transport complexes of the respiratory chain. ATP synthase complex consist of a soluble F(1) head domain - the catalytic core - and a membrane F(1) domain - the membrane proton channel. These two domains are linked by a central stalk rotating inside the F(1) region and a stationary peripheral stalk. During catalysis, ATP synthesis in the catalytic domain of F(1) is coupled via a rotary mechanism of the central stalk subunits to proton translocation. With the subunit a (MT-ATP6), forms the proton-conducting channel in the F(0) domain, that contains two crucial half-channels (inlet and outlet) that facilitate proton movement from the mitochondrial intermembrane space (IMS) into the matrix. Protons are taken up via the inlet half-channel and released through the outlet half-channel, following a Grotthuss mechanism. This chain is ATP synthase F(0) complex subunit C1, mitochondrial, found in Sus scrofa (Pig).